A 215-amino-acid polypeptide reads, in one-letter code: NAD(P)H-hydrate epimerase (215 aa).

The YjeF N-terminal domain maps to 8–212 (MYNIENKGHD…KIGIPPEAEE (205 aa)). Position 57–61 (57–61 (NNGGD)) interacts with (6S)-NADPHX. 2 residues coordinate K(+): Asn-58 and Asp-124. (6S)-NADPHX contacts are provided by residues 128-134 (GTGISGE), Tyr-139, and Asp-157. Ser-160 provides a ligand contact to K(+).

The protein belongs to the NnrE/AIBP family. K(+) is required as a cofactor.

The catalysed reaction is (6R)-NADHX = (6S)-NADHX. It carries out the reaction (6R)-NADPHX = (6S)-NADPHX. In terms of biological role, catalyzes the epimerization of the S- and R-forms of NAD(P)HX, a damaged form of NAD(P)H that is a result of enzymatic or heat-dependent hydration. This is a prerequisite for the S-specific NAD(P)H-hydrate dehydratase to allow the repair of both epimers of NAD(P)HX. The polypeptide is NAD(P)H-hydrate epimerase (Nitrosopumilus maritimus (strain SCM1)).